Here is a 444-residue protein sequence, read N- to C-terminus: MSLMVVSMACVGLFLVQRAGPHMGGQDKPFLSAWPSAVVPRGGHVTLRCHYRHRFNNFMLYKEDRIHIPIFHGRIFQESFNMSPVTTAHAGNYTCRGSHPHSPTGWSAPSNPVVIMVTGNHRKPSLLAHPGPLVKSGERVILQCWSDIMFEHFFLHKEGISKDPSRLVGQIHDGVSKANFSIGPMMLALAGTYRCYGSVTHTPYQLSAPSDPLDIVVTGPYEKPSLSAQPGPKVQAGESVTLSCSSRSSYDMYHLSREGGAHERRLPAVRKVNRTFQADFPLGPATHGGTYRCFGSFRHSPYEWSDPSDPLLVSVTGNPSSSWPSPTEPSSKSGNPRHLHILIGTSVVIILFILLLFFLLHLWCSNKKNAAVMDQEPAGNRTANSEDSDEQDPEEVTYAQLDHCVFTQRKITRPSQRPKTPPTDTILYTELPNAKPRSKVVSCP.

Positions 1-21 are cleaved as a signal peptide; sequence MSLMVVSMACVGLFLVQRAGP. Residues 22–340 lie on the Extracellular side of the membrane; the sequence is HMGGQDKPFL…SKSGNPRHLH (319 aa). 3 consecutive Ig-like C2-type domains span residues 42–102, 137–202, and 237–300; these read GGHV…HPHS, GERV…VTHT, and GESV…FRHS. 3 disulfides stabilise this stretch: Cys-49–Cys-95, Cys-144–Cys-195, and Cys-244–Cys-293. Residues Asn-92, Asn-179, and Asn-273 are each glycosylated (N-linked (GlcNAc...) asparagine). A disordered region spans residues 315-334; the sequence is VTGNPSSSWPSPTEPSSKSG. Residues 319-333 are compositionally biased toward low complexity; sequence PSSSWPSPTEPSSKS. Residues 341–360 traverse the membrane as a helical segment; that stretch reads ILIGTSVVIILFILLLFFLL. Residues 361–444 lie on the Cytoplasmic side of the membrane; the sequence is HLWCSNKKNA…KPRSKVVSCP (84 aa). 2 disordered regions span residues 375–394 and 409–444; these read QEPAGNRTANSEDSDEQDPE and RKITRPSQRPKTPPTDTILYTELPNAKPRSKVVSCP.

It belongs to the immunoglobulin superfamily.

It is found in the cell membrane. Functionally, receptor on natural killer (NK) cells for HLA Bw4 allele. Inhibits the activity of NK cells thus preventing cell lysis. In Homo sapiens (Human), this protein is Killer cell immunoglobulin-like receptor 3DL1.